The primary structure comprises 420 residues: D-tagatose-1,6-bisphosphate aldolase subunit GatZ (420 aa).

Belongs to the GatZ/KbaZ family. GatZ subfamily. Forms a complex with GatY.

The protein operates within carbohydrate metabolism; D-tagatose 6-phosphate degradation; D-glyceraldehyde 3-phosphate and glycerone phosphate from D-tagatose 6-phosphate: step 2/2. In terms of biological role, component of the tagatose-1,6-bisphosphate aldolase GatYZ that is required for full activity and stability of the Y subunit. Could have a chaperone-like function for the proper and stable folding of GatY. When expressed alone, GatZ does not show any aldolase activity. Is involved in the catabolism of galactitol. In Escherichia coli O17:K52:H18 (strain UMN026 / ExPEC), this protein is D-tagatose-1,6-bisphosphate aldolase subunit GatZ.